The sequence spans 641 residues: DNA mismatch repair protein MutL (641 aa).

The segment at 345 to 445 (PAAVAPPAPA…GDTSLGDTSP (101 aa)) is disordered. The span at 419–429 (PRTEPATRTGE) shows a compositional bias: basic and acidic residues. The segment covering 432–442 (GISSGDTSLGD) has biased composition (polar residues).

This sequence belongs to the DNA mismatch repair MutL/HexB family.

Its function is as follows. This protein is involved in the repair of mismatches in DNA. It is required for dam-dependent methyl-directed DNA mismatch repair. May act as a 'molecular matchmaker', a protein that promotes the formation of a stable complex between two or more DNA-binding proteins in an ATP-dependent manner without itself being part of a final effector complex. The polypeptide is DNA mismatch repair protein MutL (Azotobacter vinelandii (strain DJ / ATCC BAA-1303)).